The chain runs to 737 residues: Delta and Notch-like epidermal growth factor-related receptor (737 aa).

The signal sequence occupies residues 1–34 (MQPRRAQAPGAQLLPALALLLLLLGAGPRGSSLA). The Extracellular segment spans residues 35-640 (NPVPAAPLSA…LTNMPRHSLY (606 aa)). EGF-like domains lie at 44-92 (APGP…ANCQ) and 94-133 (VADPCASNPCHHGNCSSSSSSSSDGYLCICNEGYEGPNCE). The segment at 44–133 (APGPCAAQPC…NEGYEGPNCE (90 aa)) is interaction with NOTCH1. 6 cysteine pairs are disulfide-bonded: cysteine 48/cysteine 59, cysteine 53/cysteine 80, cysteine 82/cysteine 91, cysteine 98/cysteine 108, cysteine 103/cysteine 121, and cysteine 123/cysteine 132. Asparagine 223 carries an N-linked (GlcNAc...) asparagine glycan. EGF-like domains lie at 309 to 348 (PGESHANDLECSGKGKCTTKPSEATFSCTCEEQYVGTFCE), 349 to 390 (EYDA…ELCQ), 392 to 428 (KIDYCILDPCRNGATCISSLSGFTCQCPEGYFGSACE), 430 to 466 (KVDPCASSPCQNNGTCYVDGVHFTCNCSPGFTGPTCA), and 468 to 503 (LIDFCALSPCAHGTCRSVGTSYKCLCDPGYHGLYCE). Disulfide bonds link cysteine 319–cysteine 336, cysteine 338–cysteine 347, cysteine 353–cysteine 364, cysteine 358–cysteine 378, cysteine 380–cysteine 389, cysteine 396–cysteine 407, cysteine 401–cysteine 416, cysteine 418–cysteine 427, cysteine 434–cysteine 445, cysteine 439–cysteine 454, cysteine 456–cysteine 465, cysteine 472–cysteine 482, cysteine 477–cysteine 491, cysteine 493–cysteine 502, cysteine 509–cysteine 520, cysteine 514–cysteine 529, cysteine 531–cysteine 540, cysteine 547–cysteine 558, cysteine 552–cysteine 567, cysteine 569–cysteine 578, cysteine 585–cysteine 596, cysteine 590–cysteine 605, and cysteine 607–cysteine 616. In terms of domain architecture, EGF-like 8; calcium-binding spans 505–541 (EYNECLSAPCLNAATCRDLVNGYECVCLAEYKGTHCE). The 37-residue stretch at 543–579 (YKDPCANVSCLNGATCDSDGLNGTCICAPGFTGEECD) folds into the EGF-like 9 domain. The 23-residue stretch at 546-568 (PCANVSCLNGATCDSDGLNGTCI) folds into the Follistatin-like domain. Asparagine 564 is a glycosylation site (N-linked (GlcNAc...) asparagine). The EGF-like 10; calcium-binding domain occupies 581 to 617 (DINECDSNPCHHGGSCLDQPNGYNCHCPHGWVGANCE). Residues 641 to 661 (IIIGALCVAFILMLIILIVGI) traverse the membrane as a helical segment. At 662-737 (CRISRIEYQG…LVTLIKTKDL (76 aa)) the chain is on the cytoplasmic side. The interaction with AP1G1 and somatodendritic targeting stretch occupies residues 677–680 (YEEF). Phosphoserine is present on serine 685. Phosphotyrosine is present on residues tyrosine 711 and tyrosine 721. Phosphoserine is present on serine 722.

Interacts with AP1G1. Interacts with NOTCH1. As to expression, expressed in brain, spinal cord and adrenal gland.

The protein localises to the cell membrane. Functionally, activator of the NOTCH1 pathway. May mediate neuron-glia interaction during astrocytogenesis. The protein is Delta and Notch-like epidermal growth factor-related receptor (DNER) of Homo sapiens (Human).